Reading from the N-terminus, the 409-residue chain is Peptidase T (409 aa).

His79 is a binding site for Zn(2+). Asp81 is a catalytic residue. Asp140 is a Zn(2+) binding site. The active-site Proton acceptor is the Glu174. 3 residues coordinate Zn(2+): Glu175, Asp197, and His379.

It belongs to the peptidase M20B family. Zn(2+) is required as a cofactor.

It localises to the cytoplasm. It carries out the reaction Release of the N-terminal residue from a tripeptide.. In terms of biological role, cleaves the N-terminal amino acid of tripeptides. In Lysinibacillus sphaericus (strain C3-41), this protein is Peptidase T.